The sequence spans 616 residues: Coagulation factor XII (616 aa).

Residues 1–19 form the signal peptide; it reads MRALLLLGILLVSLESALL. Residues 42 to 90 enclose the Fibronectin type-II domain; that stretch reads VTGEPCHFPFQYYRQLYYKCIQRGQRGPRPWCATTPNFEKDQRWAYCLE. 13 cysteine pairs are disulfide-bonded: cysteine 47-cysteine 73, cysteine 61-cysteine 88, cysteine 98-cysteine 110, cysteine 104-cysteine 119, cysteine 121-cysteine 130, cysteine 135-cysteine 163, cysteine 161-cysteine 170, cysteine 178-cysteine 189, cysteine 183-cysteine 198, cysteine 200-cysteine 209, cysteine 217-cysteine 295, cysteine 238-cysteine 277, and cysteine 266-cysteine 290. One can recognise an EGF-like 1 domain in the interval 94 to 131; it reads VKDHCNKGNPCQKGGTCVNMPNGPHCICPDHFTGKHCQ. The O-linked (Fuc) threonine glycan is linked to threonine 109. Residues 133–173 enclose the Fibronectin type-I domain; the sequence is EKCFEPQFLQFFQENEIWHRFEPAGVSKCQCKGPKAQCKPV. The region spanning 174-210 is the EGF-like 2 domain; sequence ASQVCSTNPCLNGGSCLQTEGHRLCRCPTGYAGRLCD. The Kringle domain maps to 216 to 295; it reads RCYSDRGLSY…SWQYCRLARC (80 aa). 3 N-linked (GlcNAc...) asparagine glycosylation sites follow: asparagine 249, asparagine 271, and asparagine 335. The tract at residues 303–342 is disordered; that stretch reads PPILTPTQSPSEHQDSPLLSREPQPTTQTPSQNLTSAWCA. Residues 325–338 are compositionally biased toward polar residues; it reads PQPTTQTPSQNLTS. Intrachain disulfides connect cysteine 358/cysteine 485, cysteine 396/cysteine 412, cysteine 404/cysteine 474, cysteine 435/cysteine 438, cysteine 501/cysteine 570, cysteine 533/cysteine 549, and cysteine 560/cysteine 591. A Peptidase S1 domain is found at 372-615; it reads IVGGLVALPG…YLAWIQEHTT (244 aa). Histidine 411 serves as the catalytic Charge relay system. The N-linked (GlcNAc...) asparagine glycan is linked to asparagine 432. Residue aspartate 460 is the Charge relay system of the active site. The active-site Charge relay system is serine 564.

Belongs to the peptidase S1 family. As to quaternary structure, interacts with HRG; the interaction, which is enhanced in the presence of zinc ions and inhibited by heparin-binding, inhibits factor XII autoactivation and contact-initiated coagulation. In terms of processing, O- and N-glycosylated.

Its subcellular location is the secreted. It carries out the reaction Selective cleavage of Arg-|-Ile bonds in factor VII to form factor VIIa and factor XI to form factor XIa.. Its activity is regulated as follows. Activity is promoted in the presence of negatively charged surfaces. In terms of biological role, factor XII is a serum glycoprotein that participates in the initiation of blood coagulation, fibrinolysis, and the generation of bradykinin and angiotensin. Prekallikrein is cleaved by factor XII to form kallikrein, which then cleaves factor XII first to alpha-factor XIIa and then trypsin cleaves it to beta-factor XIIa. Alpha-factor XIIa activates factor XI to factor XIa. This is Coagulation factor XII (F12) from Sus scrofa (Pig).